A 291-amino-acid polypeptide reads, in one-letter code: Mitochondrial citrate transporter B (291 aa).

Solcar repeat units lie at residues P10–S97, L105–S193, and P201–L283. The next 6 helical transmembrane spans lie at L16–A36, S74–I94, V112–I132, T172–E192, L203–A220, and F255–V276.

Belongs to the mitochondrial carrier (TC 2.A.29) family.

The protein localises to the mitochondrion inner membrane. It carries out the reaction citrate(in) + H(+)(in) = citrate(out) + H(+)(out). Its function is as follows. Mitochondrial transporter that mediates citrate export from mitochondria to cytoplasm. Both ctpA, ctpB, and ctpD play important roles in citric acid transport across the mitochondrial membrane and function in a redundant manner. In Aspergillus niger (strain ATCC 1015 / CBS 113.46 / FGSC A1144 / LSHB Ac4 / NCTC 3858a / NRRL 328 / USDA 3528.7), this protein is Mitochondrial citrate transporter B.